A 910-amino-acid polypeptide reads, in one-letter code: Putative disease resistance protein At1g58400 (910 aa).

Residues 15 to 57 adopt a coiled-coil conformation; sequence DRLTQEYEQFQGVEDRIAELKSNLNLLKSFLKDAEAKKNTSQM. Residues 148–460 enclose the NB-ARC domain; that stretch reads REREMRQTFS…AEGILEPRHY (313 aa). Position 191–198 (191–198) interacts with ATP; the sequence is GMGGLGKT. LRR repeat units lie at residues 580 to 604 and 605 to 628; these read LELL…GIGK and LIHL…LGNL.

The protein belongs to the disease resistance NB-LRR family.

Potential disease resistance protein. This chain is Putative disease resistance protein At1g58400, found in Arabidopsis thaliana (Mouse-ear cress).